A 429-amino-acid chain; its full sequence is Enolase (429 aa).

Residue Q165 participates in (2R)-2-phosphoglycerate binding. The active-site Proton donor is E207. The Mg(2+) site is built by D244, E287, and D314. Residues K339, R368, S369, and K390 each contribute to the (2R)-2-phosphoglycerate site. Residue K339 is the Proton acceptor of the active site.

This sequence belongs to the enolase family. It depends on Mg(2+) as a cofactor.

The protein resides in the cytoplasm. It is found in the secreted. Its subcellular location is the cell surface. The enzyme catalyses (2R)-2-phosphoglycerate = phosphoenolpyruvate + H2O. It participates in carbohydrate degradation; glycolysis; pyruvate from D-glyceraldehyde 3-phosphate: step 4/5. Catalyzes the reversible conversion of 2-phosphoglycerate (2-PG) into phosphoenolpyruvate (PEP). It is essential for the degradation of carbohydrates via glycolysis. The protein is Enolase of Roseiflexus sp. (strain RS-1).